A 356-amino-acid polypeptide reads, in one-letter code: MIQELFRKDIKDFRPYDAKGEKYKIKLDANESFIGLSKEIKNKIIRSLIELEFNNYPDPDATKLKKAYGDYIGIDEKNIMVGNGSDELIQILTNAFLDKNEKIVTLNPDFSMYEVYTKVRGGKVSVFDLDEDFKLNVNKIIEYINEEKPKMFIFSNPNNPTGGVIPKYDIIKIIENVNCIVVVDEAYMEFYGDSILDYIKKYDNLIVLRTASKAIGSAALRLGFLITNDTLLREIKKVKPPFNVNSVSQVIGEIILKDKDFIRESIDKVLYERNYLLKELKKIDGLKVYETKSNFVLIYNENANEINESLIKIGIKVRSFTDENLKNFIRITVGSREQNIEVINCIKGDNYDYKEM.

The residue at position 213 (Lys-213) is an N6-(pyridoxal phosphate)lysine.

The protein belongs to the class-II pyridoxal-phosphate-dependent aminotransferase family. Histidinol-phosphate aminotransferase subfamily. As to quaternary structure, homodimer. The cofactor is pyridoxal 5'-phosphate.

The enzyme catalyses L-histidinol phosphate + 2-oxoglutarate = 3-(imidazol-4-yl)-2-oxopropyl phosphate + L-glutamate. The protein operates within amino-acid biosynthesis; L-histidine biosynthesis; L-histidine from 5-phospho-alpha-D-ribose 1-diphosphate: step 7/9. The chain is Histidinol-phosphate aminotransferase from Clostridium novyi (strain NT).